Here is a 153-residue protein sequence, read N- to C-terminus: MAL-like protein (153 aa).

The next 4 helical transmembrane spans lie at 22–42 (LFLT…FLVW), 59–79 (VMYV…SYLF), 97–117 (GTTG…TIVS), and 131–151 (AASF…FSIY). Positions 22 to 153 (LFLTIPFAFF…ILHAFSIYYH (132 aa)) constitute an MARVEL domain.

It belongs to the MAL family.

The protein localises to the membrane. The protein is MAL-like protein (MALL) of Homo sapiens (Human).